A 343-amino-acid polypeptide reads, in one-letter code: Polyprenyl transferase spyF (343 aa).

Helical transmembrane passes span 38–58 (WLAV…SHPL), 62–82 (VSVW…PASI), 92–112 (LLCL…NDWI), 138–158 (GFIW…STIL), 170–190 (LYIY…AIGW), 241–261 (AYVA…GLVL), 273–293 (SGWL…HQLL), and 311–331 (FALG…SSGM).

This sequence belongs to the UbiA prenyltransferase family. Requires Mg(2+) as cofactor.

It is found in the membrane. It catalyses the reaction triacetate lactone + (2E,6E,10E)-geranylgeranyl diphosphate = (2E,6E,10E)-geranylgeranyl-triacetate lactone + diphosphate. It participates in secondary metabolite biosynthesis; terpenoid biosynthesis. Functionally, polyprenyl transferase; part of the gene cluster that mediates the biosynthesis of meroterpenoids called sartorypyrones. Within the pathway, spyF catalyzes the prenylation of triacetic acid lactone (TAL) to produce geranylgeranyl-triacetate lactone. The biosynthesis of sartorypyrones begins with the production of triacetic acid lactone (TAL) by the NR-PKS spyA using one molecule of acetyl-CoA and two molecules of malonyl-CoA. The prenyltransferase spyF then conjugates geranylgeranyl pyrophosphate (GGPP) to TAL to form geranylgeranyl-triacetate lactone, for which the pathway-specific geranylgeranyl pyrophosphate synthase (GGPS) spyE is required to provide GGPP. Subsequently, geranylgeranyl-triacetate lactone is epoxidized at the terminal olein by the FAD-dependent monooxygenase spyC, followed by cyclization of the terpenoid component catalyzed by the terpene cyclase spyD to produce both the bicyclic sartorypyrone F and the monocyclic sartorypyrone D. Finally, the last step of the biosynthesis involves the acetylation of the meroterpenoids sartorypyrones D and F by the acetyltransferase SpyB to produce sartorypyrones A and G, respectively. This chain is Polyprenyl transferase spyF, found in Aspergillus fumigatus (strain ATCC MYA-4609 / CBS 101355 / FGSC A1100 / Af293) (Neosartorya fumigata).